We begin with the raw amino-acid sequence, 331 residues long: Vacuolar protein sorting-associated protein 26B (331 aa).

Positions 310-331 are disordered; sequence AAQRYEGSNPEPTSAQAKEETD.

It belongs to the VPS26 family. As to quaternary structure, component of the heterotrimeric retromer cargo-selective complex (CSC) which is believed to associate with variable sorting nexins to form functionally distinct retromer complex variants.

Its subcellular location is the cytoplasm. It localises to the membrane. It is found in the endosome. Functionally, acts as a component of the retromer cargo-selective complex (CSC). The CSC is believed to be the core functional component of retromer or respective retromer complex variants acting to prevent missorting of selected transmembrane cargo proteins into the lysosomal degradation pathway. Retromer mediates retrograde transport of cargo proteins from endosomes to the trans-Golgi network (TGN). The polypeptide is Vacuolar protein sorting-associated protein 26B (vps26b) (Danio rerio (Zebrafish)).